The following is a 237-amino-acid chain: Leucyl/phenylalanyl-tRNA--protein transferase (237 aa).

It belongs to the L/F-transferase family.

The protein resides in the cytoplasm. It carries out the reaction N-terminal L-lysyl-[protein] + L-leucyl-tRNA(Leu) = N-terminal L-leucyl-L-lysyl-[protein] + tRNA(Leu) + H(+). The enzyme catalyses N-terminal L-arginyl-[protein] + L-leucyl-tRNA(Leu) = N-terminal L-leucyl-L-arginyl-[protein] + tRNA(Leu) + H(+). It catalyses the reaction L-phenylalanyl-tRNA(Phe) + an N-terminal L-alpha-aminoacyl-[protein] = an N-terminal L-phenylalanyl-L-alpha-aminoacyl-[protein] + tRNA(Phe). Its function is as follows. Functions in the N-end rule pathway of protein degradation where it conjugates Leu, Phe and, less efficiently, Met from aminoacyl-tRNAs to the N-termini of proteins containing an N-terminal arginine or lysine. This chain is Leucyl/phenylalanyl-tRNA--protein transferase (aat), found in Vibrio vulnificus (strain CMCP6).